A 539-amino-acid polypeptide reads, in one-letter code: Chaperonin GroEL 2 (539 aa).

ATP-binding positions include 29 to 32, 86 to 90, Gly-414, 479 to 481, and Asp-495; these read TIGP, DGTTT, and DAL.

The protein belongs to the chaperonin (HSP60) family. In terms of assembly, forms a cylinder of 14 subunits composed of two heptameric rings stacked back-to-back. Interacts with the co-chaperonin GroES.

It is found in the cytoplasm. It carries out the reaction ATP + H2O + a folded polypeptide = ADP + phosphate + an unfolded polypeptide.. Functionally, together with its co-chaperonin GroES, plays an essential role in assisting protein folding. The GroEL-GroES system forms a nano-cage that allows encapsulation of the non-native substrate proteins and provides a physical environment optimized to promote and accelerate protein folding. This is Chaperonin GroEL 2 from Synechococcus sp. (strain JA-2-3B'a(2-13)) (Cyanobacteria bacterium Yellowstone B-Prime).